Consider the following 1093-residue polypeptide: Protein transport protein Sec24A (1093 aa).

Disordered regions lie at residues methionine 1–proline 29, histidine 60–threonine 168, glycine 189–proline 226, and serine 294–proline 328. 2 stretches are compositionally biased toward polar residues: residues alanine 112–phenylalanine 126 and tryptophan 138–threonine 168. Composition is skewed to pro residues over residues serine 191 to proline 201 and proline 209 to valine 221. Positions tyrosine 299–proline 328 are enriched in polar residues. Residues cysteine 431, cysteine 434, cysteine 452, and cysteine 455 each contribute to the Zn(2+) site. Residues cysteine 431–cysteine 455 form a zinc finger-like region. The stretch at proline 966–phenylalanine 1038 is one Gelsolin-like repeat.

Belongs to the SEC23/SEC24 family. SEC24 subfamily. As to quaternary structure, COPII is composed of at least five proteins: the Sec23/24 complex, the Sec13/31 complex and Sar1. Interacts with TMED2. Interacts (as part of the Sec23/24 complex) with SEC22B; recruits SEC22B into COPII-coated vesicles for its transport from the endoplasmic reticulum to the Golgi. Interacts with STING1; promoting STING1 translocation to COPII vesicles in a STEEP1-dependent manner. Interacts with TMEM39A. Interacts with SACM1L; this interaction is reduced in the absence of TMEM39A. Interacts with kinase FAM20C; transport of FAM20C from the endoplasmic reticulum to the Golgi is likely to be mediated by COPII vesicles.

It is found in the cytoplasmic vesicle. The protein localises to the COPII-coated vesicle membrane. It localises to the endoplasmic reticulum membrane. The protein resides in the cytoplasm. Its subcellular location is the cytosol. Component of the coat protein complex II (COPII) which promotes the formation of transport vesicles from the endoplasmic reticulum (ER). The coat has two main functions, the physical deformation of the endoplasmic reticulum membrane into vesicles and the selection of cargo molecules for their transport to the Golgi complex. Plays a central role in cargo selection within the COPII complex and together with SEC24B may have a different specificity compared to SEC24C and SEC24D. May package preferentially cargos with cytoplasmic DxE or LxxLE motifs and may also recognize conformational epitopes. This is Protein transport protein Sec24A from Homo sapiens (Human).